Here is a 1187-residue protein sequence, read N- to C-terminus: DNA excision repair protein CSB (1187 aa).

A compositionally biased stretch (polar residues) spans 31 to 43 (QATTDPADSSGPT). Disordered regions lie at residues 31 to 53 (QATT…PDDA), 75 to 102 (IKGA…HHGA), 217 to 242 (KRVE…MEAS), and 265 to 351 (DSES…EGSD). Basic and acidic residues-rich tracts occupy residues 92 to 101 (KGKDQPDHHG) and 217 to 230 (KRVE…RQDD). The span at 300-319 (KRPRNKTKRPLPGKKWRKAN) shows a compositional bias: basic residues. The segment covering 339–351 (SDDDEDQVTEGSD) has biased composition (acidic residues). In terms of domain architecture, Helicase ATP-binding spans 384–580 (WELHCQRAGG…WSLFDFVFPG (197 aa)). Position 397–404 (397–404 (DEMGLGKT)) interacts with ATP. A disordered region spans residues 457 to 480 (SSSKKSKRSSDSDSEASWDSDQEE). Acidic residues predominate over residues 468–480 (SDSEASWDSDQEE). A DEGH box motif is present at residues 531 to 534 (DEGH). A Helicase C-terminal domain is found at 716–876 (KVVEQVLKVW…RRFFKARDMK (161 aa)). Disordered stretches follow at residues 916–945 (LYAA…HCPD) and 1095–1116 (GSAS…SSTR). Over residues 918–933 (AASATPTTSGTEPSSS) the composition is skewed to low complexity.

This sequence belongs to the SNF2/RAD54 helicase family. In terms of assembly, homodimer. Binds DNA. As to expression, expressed in proliferating tissues. Highly expressed in shoot apical meristem (SAM). Expressed in roots, young leaves, flag leaves, and panicles. Expressed at very low levels in mature leaves.

It localises to the nucleus. In terms of biological role, essential factor involved in transcription-coupled nucleotide excision repair (TCR) which allows RNA polymerase II-blocking lesions to be rapidly removed from the transcribed strand of active genes. Upon DNA-binding, it locally modifies DNA conformation by wrapping the DNA around itself, thereby modifying the interface between stalled RNA polymerase II and DNA. It is required for transcription-coupled repair complex formation. This is DNA excision repair protein CSB from Oryza sativa subsp. japonica (Rice).